Reading from the N-terminus, the 844-residue chain is MTQAALAMSITATDPVDTATDARLKECIDSACQRVAPLWPLKHFVAVNPFLGFTGQSFAATAATFERVVRTRILMPRAFYRQALDDGRIDDAALARALDIHPSVGLGVEQLKQQARATAAPSSPPAVVATVAEVLDRLAEGDRYVSLVAFMIDEISAFCAGYFDEGQASWPSPVRSLKPYAAWRRLAAYDRNPEVMGLTGFRNAIAELPADPVQAIGLIITRLGIPERAVEDYLVRALFDIGGWSAYARYIGWSAERDGQRDDTLVELLAIRLAWGYALFQARTDAAFKIAWAQAMEEAAKLPDDQRLDDTPELAVDLVLHEAYEIAIRNQLIARLAGHGTGAAVARLPARPPVQAAFCIDVRSEIFRRALETAYPEAETIGFAGFFGFPIEYVPIGHTRGGAQCPVLLKPAFIVCEAVKDADDVEQAEVLGLRLLRRRAAKAWKSFKVSAVSSFSFVETAGLGFAAKIATDSAGVTRPVPSPVVDGLDPEIAARVMPRLAPGELGGRVTGFNDVQRVAMAEAALKAMSLTGPFARLVLLAGHGSTTVNNPHASGLDCGACGGHTGEANARVAAAVLNDPRVRDGLRAKGIDIPADCWFLGALHDTTTDAVTVFDEDDVPAALAQDLARLKARLADAARLARLERSALLGIPDKSAVDAAVIARSRDWSQVRPEWGLAGNCAFIAAPRSFTRGLDLGGRAFLHSYEAERDDGHRTLELIMTAPMVVANWINLQYFGSTVNNAAFGSGNKVLHNIVGQLGVLEGNAGDLRVGLPWQSVHDGTRLVHEPVRLNVFIAAPESAMDEIMQRQPGVRDLVVNGWVMLHSLGDHGTTIRRCVSPGVWIAA.

Zn(2+) contacts are provided by C359, D361, H543, and C558.

It belongs to the inorganic carbon transporter (TC 9.A.2) DabA family. Forms a complex with DabB. Zn(2+) serves as cofactor.

It localises to the cell inner membrane. In terms of biological role, part of an energy-coupled inorganic carbon pump. In Bradyrhizobium sp. (strain BTAi1 / ATCC BAA-1182), this protein is Probable inorganic carbon transporter subunit DabA 1.